A 103-amino-acid polypeptide reads, in one-letter code: uncharacterized protein (103 aa).

This is an uncharacterized protein from Shigella flexneri.